Consider the following 295-residue polypeptide: Ribosomal protein L11 methyltransferase (295 aa).

Residues threonine 146, glycine 167, aspartate 189, and asparagine 231 each contribute to the S-adenosyl-L-methionine site.

Belongs to the methyltransferase superfamily. PrmA family.

Its subcellular location is the cytoplasm. The catalysed reaction is L-lysyl-[protein] + 3 S-adenosyl-L-methionine = N(6),N(6),N(6)-trimethyl-L-lysyl-[protein] + 3 S-adenosyl-L-homocysteine + 3 H(+). Methylates ribosomal protein L11. The polypeptide is Ribosomal protein L11 methyltransferase (Vibrio campbellii (strain ATCC BAA-1116)).